A 616-amino-acid chain; its full sequence is Dihydroxy-acid dehydratase (616 aa).

Aspartate 81 contacts Mg(2+). Cysteine 122 lines the [2Fe-2S] cluster pocket. Positions 123 and 124 each coordinate Mg(2+). The residue at position 124 (lysine 124) is an N6-carboxylysine. Cysteine 195 is a [2Fe-2S] cluster binding site. Residue glutamate 491 coordinates Mg(2+). Catalysis depends on serine 517, which acts as the Proton acceptor.

Belongs to the IlvD/Edd family. In terms of assembly, homodimer. [2Fe-2S] cluster serves as cofactor. It depends on Mg(2+) as a cofactor.

It carries out the reaction (2R)-2,3-dihydroxy-3-methylbutanoate = 3-methyl-2-oxobutanoate + H2O. The catalysed reaction is (2R,3R)-2,3-dihydroxy-3-methylpentanoate = (S)-3-methyl-2-oxopentanoate + H2O. Its pathway is amino-acid biosynthesis; L-isoleucine biosynthesis; L-isoleucine from 2-oxobutanoate: step 3/4. The protein operates within amino-acid biosynthesis; L-valine biosynthesis; L-valine from pyruvate: step 3/4. Functions in the biosynthesis of branched-chain amino acids. Catalyzes the dehydration of (2R,3R)-2,3-dihydroxy-3-methylpentanoate (2,3-dihydroxy-3-methylvalerate) into 2-oxo-3-methylpentanoate (2-oxo-3-methylvalerate) and of (2R)-2,3-dihydroxy-3-methylbutanoate (2,3-dihydroxyisovalerate) into 2-oxo-3-methylbutanoate (2-oxoisovalerate), the penultimate precursor to L-isoleucine and L-valine, respectively. The sequence is that of Dihydroxy-acid dehydratase from Methylobacillus flagellatus (strain ATCC 51484 / DSM 6875 / VKM B-1610 / KT).